The primary structure comprises 1183 residues: MGNAPSQDPERSSPPMLSADDAEYPREYRTLGGGGGGGSGGRRFSNVGLVHTSERRHTVIAAQSLEALSGLQKADADRKRDAFMDHLKSKYPQHALALRGQQDRMREQPNYWSFKTRSSRHTQGAQPGLADQAAKLSYASAESLETMSEAELPLGFSRMNRFRQSLPLSRSASQTKLRSPGVLFLQFGEETRRVHITHEVSSLDTLHALIAHMFPQKLTMGMLKSPNTAILIKDEARNVFYELEDVRDIQDRSIIKIYRKEPLYAAFPGSHLTNGDLRREMVYASRESSPTRRLNNLSPAPHLASGSPPPGLPSGLPSGLQSGSPSRSRLSYAGGRPPSYAGSPVHHAAERLGGAPAAQGVSPSPSAILERRDVKPDEDLASKAGGMVLVKGEGLYADPYGLLHEGRLSLAAAAGDPFAYPGAGGLYKRGSVRSLSTYSAAALQSDLEDSLYKAAGGGGPLYGDGYGFRLPPSSPQKLADVAAPPGGPPPPHSPYSGPPSRGSPVRQSFRKDSGSSSVFAESPGGKTRSAGSASTAGAPPSELFPGPGERSLVGFGPPVPAKDTETRERMEAMEKQIASLTGLVQSALLRGSEPETPSEKIEGSNGAATPSAPCGSGGRSSGATPVSGPPPPSASSTPAGQPTAVSRLQMQLHLRGLQNSASDLRGQLQQLRKLQLQNQESVRALLKRTEAELSMRVSEAARRQEDPLQRQRTLVEEERLRYLNDEELITQQLNDLEKSVEKIQRDVSHNHRLVPGPELEEKALVLKQLGETLTELKAHFPGLQSKMRVVLRVEVEAVKFLKEEPQRLDGLLKRCRGVTDTLAQIRRQVDEGVWPPPNNLLSQSPKKVTAETDFNKSVDFEMPPPSPPLNLHELSGPAEGASLTPKGGNPTKGLDTPGKRSVDKAVSVEAAERDWEEKRAALTQYSAKDINRLLEETQAELLKAIPDLDCASKAHPGPAPTPDHKPPKAPHGQKAAPRTEPSGRRGSDELTVPRYRTEKPSKSPPPPPPRRSFPSSHGLTTTRTGEVVVTSKKDSAFIKKAESEELEVQKPQVKLRRAVSEVARPASTPPIMASAIKDEDDEDRIIAELESGGGSVPPMKVVTPGASRLKAAQGQAGSPDKSKHGKQRAEYMRIQAQQQATKPSKEMSGSNETSSPVSEKPSASRTSIPVLTSFGARNSSISF.

The disordered stretch occupies residues 1-44 (MGNAPSQDPERSSPPMLSADDAEYPREYRTLGGGGGGGSGGRRF). Residues S13 and S18 each carry the phosphoserine modification. Positions 31–41 (LGGGGGGGSGG) are enriched in gly residues. Position 45 is a phosphoserine (S45). Position 52 is a phosphothreonine (T52). 7 positions are modified to phosphoserine: S53, S64, S143, S165, S169, S179, and S225. Position 241 is a phosphotyrosine (Y241). The disordered stretch occupies residues 284–379 (ASRESSPTRR…ERRDVKPDED (96 aa)). A compositionally biased stretch (polar residues) spans 286 to 296 (RESSPTRRLNN). Over residues 297-306 (LSPAPHLASG) the composition is skewed to low complexity. Phosphoserine is present on residues S298, S307, and S324. The span at 313–331 (PSGLPSGLQSGSPSRSRLS) shows a compositional bias: low complexity. Omega-N-methylarginine is present on residues R329 and R336. Phosphoserine is present on residues S343, S362, and S364. The span at 369–379 (LERRDVKPDED) shows a compositional bias: basic and acidic residues. The residue at position 396 (Y396) is a Phosphotyrosine. Residues 466–643 (YGFRLPPSSP…ASSTPAGQPT (178 aa)) form a disordered region. Residues 485-497 (PGGPPPPHSPYSG) are compositionally biased toward pro residues. Phosphoserine occurs at positions 493, 496, and 500. R501 bears the Omega-N-methylarginine mark. Phosphoserine is present on residues S503, S513, S515, S517, and S522. Low complexity predominate over residues 524 to 541 (GGKTRSAGSASTAGAPPS). The segment covering 562-574 (KDTETRERMEAME) has biased composition (basic and acidic residues). Phosphoserine occurs at positions 598 and 621. Phosphothreonine occurs at positions 624 and 637. Over residues 634-643 (ASSTPAGQPT) the composition is skewed to low complexity. Residues 647–697 (RLQMQLHLRGLQNSASDLRGQLQQLRKLQLQNQESVRALLKRTEAELSMRV) form an interaction with SNAP25 region. Coiled coils occupy residues 654–674 (LRGLQNSASDLRGQLQQLRKL) and 726–746 (EELITQQLNDLEKSVEKIQRD). 3 positions are modified to phosphoserine: S844, S857, and S866. Disordered regions lie at residues 861 to 907 (EMPP…KAVS) and 949 to 1032 (DCAS…VTSK). T884 carries the phosphothreonine modification. S987 is modified (phosphoserine). Over residues 1002 to 1011 (KSPPPPPPRR) the composition is skewed to pro residues. Phosphoserine is present on residues S1043 and S1060. 2 disordered regions span residues 1058-1081 (AVSEVARPASTPPIMASAIKDEDD) and 1105-1183 (GASR…SISF). Positions 1135–1183 (QAQQQATKPSKEMSGSNETSSPVSEKPSASRTSIPVLTSFGARNSSISF) are enriched in polar residues.

This sequence belongs to the SRCIN1 family. In terms of assembly, interacts with the N-terminal coiled-coil region of SNAP25. Interacts with BCAR1/p130Cas and SRC through its C-terminal domain. Interacts with CSK, CTTN, SORBS3/vinexin, SYP and MAPRE3/EB3. In terms of processing, tyrosine-phosphorylated in response to EGF and to cell adhesion to integrin ligands. In terms of tissue distribution, expressed in some primary breast carcinomas where its presence is significantly associated with increased tumor size. Not detected in normal breast tissue.

The protein localises to the cytoplasm. It localises to the cytoskeleton. The protein resides in the cell projection. It is found in the axon. Its subcellular location is the dendrite. The protein localises to the presynapse. It localises to the postsynapse. The protein resides in the postsynaptic density. Functionally, acts as a negative regulator of SRC by activating CSK which inhibits SRC activity and downstream signaling, leading to impaired cell spreading and migration. Regulates dendritic spine morphology. Involved in calcium-dependent exocytosis. May play a role in neurotransmitter release or synapse maintenance. The chain is SRC kinase signaling inhibitor 1 from Homo sapiens (Human).